We begin with the raw amino-acid sequence, 93 residues long: Pyrimidine/purine nucleoside phosphorylase (93 aa).

This sequence belongs to the nucleoside phosphorylase PpnP family.

It carries out the reaction a purine D-ribonucleoside + phosphate = a purine nucleobase + alpha-D-ribose 1-phosphate. The enzyme catalyses adenosine + phosphate = alpha-D-ribose 1-phosphate + adenine. The catalysed reaction is cytidine + phosphate = cytosine + alpha-D-ribose 1-phosphate. It catalyses the reaction guanosine + phosphate = alpha-D-ribose 1-phosphate + guanine. It carries out the reaction inosine + phosphate = alpha-D-ribose 1-phosphate + hypoxanthine. The enzyme catalyses thymidine + phosphate = 2-deoxy-alpha-D-ribose 1-phosphate + thymine. The catalysed reaction is uridine + phosphate = alpha-D-ribose 1-phosphate + uracil. It catalyses the reaction xanthosine + phosphate = alpha-D-ribose 1-phosphate + xanthine. Its function is as follows. Catalyzes the phosphorolysis of diverse nucleosides, yielding D-ribose 1-phosphate and the respective free bases. Can use uridine, adenosine, guanosine, cytidine, thymidine, inosine and xanthosine as substrates. Also catalyzes the reverse reactions. This chain is Pyrimidine/purine nucleoside phosphorylase, found in Pseudomonas aeruginosa (strain LESB58).